Here is a 451-residue protein sequence, read N- to C-terminus: MNLEVKKIDTANARLSAKPSIENLEKRYDKIAQKIAQKVKIDGFRRGKVPLSLVKTRYQAQIEQDAQEEMIQEVLKNAFKELGIENKDLIGSPNLTKFEKKDTHFEIEADIGLKPTIVLDKIKECVPSVGVEIPNEEKINERLKQLAKDYAKFVDTDAQRKAQNDDKLTIDFEGFIDNAPFEGGKAENFNLILGSKQMLEDFEKALLGMQAGEEKEFPLIFPSGYHAEHLAGKEALFKVKLHQIQVREALEINDELAKIVLANEENATLKLLKERVEGQLFLENKARLYNEELKEKLIENLDEKIVFDLPKTIIEQEMDLLFRNALYSMQAEEVKSLQESQEKAKEKRESFRNDATKSVKITFIIDALAKEEKIGVHDNEVFQTLYYEAMMTGQNPENLIEQYRKNNMLAAVKMAMIEDRVLAYLLDKNLPKEQQEILEKMRPNAQKTQAG.

The PPIase FKBP-type domain occupies 165–250; the sequence is DDKLTIDFEG…LHQIQVREAL (86 aa).

It belongs to the FKBP-type PPIase family. Tig subfamily.

The protein localises to the cytoplasm. The enzyme catalyses [protein]-peptidylproline (omega=180) = [protein]-peptidylproline (omega=0). In terms of biological role, involved in protein export. Acts as a chaperone by maintaining the newly synthesized protein in an open conformation. Functions as a peptidyl-prolyl cis-trans isomerase. This is Trigger factor from Helicobacter pylori (strain P12).